The chain runs to 486 residues: Arginine/agmatine antiporter (486 aa).

12 helical membrane-spanning segments follow: residues 12–32 (LGAIALAGMVISSMIGGGIFS), 41–61 (AGVGAIILAWILTGVGMFFIA), 85–105 (GFGPYIGFTIGWGYWLCQIFG), 132–152 (PAILGGSILIWVFNFIVLKGI), 160–180 (IIGTVGKLVPLIVFIIITAFL), 211–231 (STMLVTLWAFIGIEGAVVMSA), 242–262 (ATILGFTGCLTVYILLSILPF), 296–316 (VGLLIAVLSSWLSWTMIVAEI), 341–361 (VSLYVTSALMQIAMLLVYFST), 367–387 (MLSITGVMVLPAYFASAAFLV), 418–438 (IWLIYAGGLKYLLMAIILLAL), and 461–481 (EVTEITIIAFLALLAIFLFST).

This sequence belongs to the amino acid-polyamine-organocation (APC) superfamily. Basic amino acid/polyamine antiporter (APA) (TC 2.A.3.2) family.

The protein localises to the cell inner membrane. In terms of biological role, catalyzes the exchange of L-arginine for agmatine. The arginine uptake by the bacterium in the macrophage may be a virulence factor against the host innate immune response. The sequence is that of Arginine/agmatine antiporter (aaxC) from Chlamydia abortus (strain DSM 27085 / S26/3) (Chlamydophila abortus).